We begin with the raw amino-acid sequence, 266 residues long: Vitamin B12-binding protein (266 aa).

The signal sequence occupies residues 1–22 (MAKSLFRALVALSFLAPLWLNA). Residues 25–266 (RVITLSPANT…QLCNALSQVD (242 aa)) enclose the Fe/B12 periplasmic-binding domain. Residues Tyr50 and 242-246 (DWFER) contribute to the cyanocob(III)alamin site. Cys183 and Cys259 are oxidised to a cystine.

It belongs to the BtuF family. As to quaternary structure, the complex is composed of two ATP-binding proteins (BtuD), two transmembrane proteins (BtuC) and a solute-binding protein (BtuF).

The protein resides in the periplasm. Functionally, part of the ABC transporter complex BtuCDF involved in vitamin B12 import. Binds vitamin B12 and delivers it to the periplasmic surface of BtuC. This Escherichia coli (strain K12) protein is Vitamin B12-binding protein (btuF).